The chain runs to 1259 residues: Lysine-specific demethylase 2B (1259 aa).

Residues 147-315 (FSHTKLERVV…MQLRVFEIED (169 aa)) enclose the JmjC domain. Thr-208 contributes to the substrate binding site. 2 residues coordinate Fe cation: His-211 and Asp-213. Position 228 (Lys-228) interacts with substrate. Fe cation is bound at residue His-283. Over residues 388-402 (EEKGNLVEKPSKQSG) the composition is skewed to basic and acidic residues. Disordered regions lie at residues 388–463 (EEKG…ATDM) and 536–562 (KPSKNRAVGRPKGKIASSPAVKLSANR). The span at 403-413 (DESSTTNSTHS) shows a compositional bias: polar residues. The span at 414–423 (NGKDAAEKKQ) shows a compositional bias: basic and acidic residues. A compositionally biased stretch (polar residues) spans 426-437 (TLMQQLKRTLSN). Residues 536–548 (KPSKNRAVGRPKG) show a composition bias toward basic residues. The segment at 567-613 (ARRRRTRCRKCEACLRTECGECHFCKDMKKFGGPGRMKQSCIMRQCI) adopts a CXXC-type zinc-finger fold. Positions 574, 577, 580, 585, 588, 591, 607, 612, 623, 626, 649, 652, 657, 660, 680, and 683 each coordinate Zn(2+). The segment at 620–686 (TAVCLVCGEA…CWECPKCNHA (67 aa)) adopts a PHD-type zinc-finger fold. Composition is skewed to basic and acidic residues over residues 729 to 763 (KKKVEREETPKQIPEEQPKKKPTEGIIKKKPEDGH) and 771 to 790 (EKPPDPSVRKRLKLVKEEKL). Residues 729-958 (KKKVEREETP…PPPSLSPPKC (230 aa)) are disordered. The span at 835 to 848 (SRSSSPTAGPSTEG) shows a compositional bias: polar residues. Positions 854-863 (KKKIRRKRRV) are enriched in basic residues. Basic and acidic residues predominate over residues 864–877 (SNKELSKELSKELN). Residues 864–891 (SNKELSKELSKELNQEIQKTESSLASEN) adopt a coiled-coil conformation. Positions 878-889 (QEIQKTESSLAS) are enriched in polar residues. Positions 890–908 (ENHHPIKSEPESDNEESKK) are enriched in basic and acidic residues. The F-box domain maps to 985–1030 (AHVMQREVWMAIFSYLSHRDLCICMRICRTWNRWCCDKRLWTQIDL). LRR repeat units follow at residues 1056 to 1081 (WTNISKKQLSWLINRLPALRDLNLSG), 1082 to 1105 (CSWIAVSALCSSCCPLLRTLNVQW), 1145 to 1170 (GLDITDASLRLMIRHMPLLAKLDLSY), 1171 to 1200 (CNHVTDQSINLLTAVGTSTRDTLLEMNLSD), and 1201 to 1225 (CNNVTDQCLTFFKRCGNICLIDLRF).

The protein belongs to the JHDM1 histone demethylase family. Fe(2+) is required as a cofactor.

It localises to the nucleus. It is found in the nucleolus. The protein localises to the chromosome. The enzyme catalyses N(6),N(6)-dimethyl-L-lysyl(36)-[histone H3] + 2 2-oxoglutarate + 2 O2 = L-lysyl(36)-[histone H3] + 2 formaldehyde + 2 succinate + 2 CO2. Histone demethylase activity is inhibited by fumarate. Histone demethylase that demethylates 'Lys-4' and 'Lys-36' of histone H3, thereby playing a central role in histone code. Preferentially demethylates trimethylated H3 'Lys-4' and dimethylated H3 'Lys-36' residue while it has weak or no activity for mono- and tri-methylated H3 'Lys-36'. Preferentially binds the transcribed region of ribosomal RNA and represses the transcription of ribosomal RNA genes which inhibits cell growth and proliferation. This Xenopus laevis (African clawed frog) protein is Lysine-specific demethylase 2B (kdm2b).